The sequence spans 149 residues: Oligosaccharyltransferase complex subunit OSTC (149 aa).

Residues 1 to 32 (METLFRLPFAVLECPNIKLKRPGWVHMPSAMT) are Cytoplasmic-facing. Residues 33–53 (VYALVVVSYFLITGGIIYDVI) traverse the membrane as a helical segment. The Extracellular portion of the chain corresponds to 54–83 (VEPPSVGSMTDEHGHQRPVAFLAYRVNGQY). Residues 84–104 (IMEGLASSFLFTMGGLGFIIL) traverse the membrane as a helical segment. At 105–117 (DRSNAPNIPKLNR) the chain is on the cytoplasmic side. A helical membrane pass occupies residues 118–138 (FLLLFIGFVSVLLSFFMARVF). At 139 to 149 (MRMKLPGYLMG) the chain is on the extracellular side.

This sequence belongs to the OSTC family. In terms of assembly, specific component of the STT3A-containing form of the oligosaccharyltransferase (OST) complex.

Its subcellular location is the membrane. Its pathway is protein modification; protein glycosylation. Specific component of the STT3A-containing form of the oligosaccharyl transferase (OST) complex that catalyzes the initial transfer of a defined glycan (Glc(3)Man(9)GlcNAc(2) in eukaryotes) from the lipid carrier dolichol-pyrophosphate to an asparagine residue within an Asn-X-Ser/Thr consensus motif in nascent polypeptide chains, the first step in protein N-glycosylation. N-glycosylation occurs cotranslationally and the complex associates with the Sec61 complex at the channel-forming translocon complex that mediates protein translocation across the endoplasmic reticulum (ER). All subunits are required for a maximal enzyme activity. The protein is Oligosaccharyltransferase complex subunit OSTC of Gallus gallus (Chicken).